The sequence spans 328 residues: MDIIDTALPDVKLLKPQVFTDGRGFFMETFRDGWFKENIADRTFVQENHSNSSKGVLRGLHYQTENTQGKLVRVVVGEVFDVAVDMREGSPTFGKWAGATLSAQNRYQLWIPEGFAHGFCVLGDAAEVVYKCTDYYNPETEQVLIWNDPAIGIGWPLQTAPLLSPKDLAGKTWAQAEKSALRFPDKKCRPNVSDGIFSDRLPTRLQYALCKEKHPGNEERQAQPRSGGIPVLQIQRERRIRAAVGHREGNNKRHNYTNQAFTDNQACREKRTDTVGVFQTAFAVFRLLANDVFQHRRQHRACHDGHIDGRRQINAHTDRKDGQGKFTA.

Substrate is bound by residues Arg-23, Glu-28, 46 to 48 (QEN), and Arg-58. The active-site Proton acceptor is His-61. Substrate contacts are provided by Lys-70 and His-117. Tyr-130 (proton donor) is an active-site residue. Substrate-binding residues include Glu-141 and Lys-166.

The protein belongs to the dTDP-4-dehydrorhamnose 3,5-epimerase family. As to quaternary structure, homodimer.

It carries out the reaction dTDP-4-dehydro-6-deoxy-alpha-D-glucose = dTDP-4-dehydro-beta-L-rhamnose. Its pathway is carbohydrate biosynthesis; dTDP-L-rhamnose biosynthesis. It functions in the pathway bacterial outer membrane biogenesis; LPS O-antigen biosynthesis. Its function is as follows. Catalyzes the epimerization of the C3' and C5'positions of dTDP-6-deoxy-D-xylo-4-hexulose, forming dTDP-6-deoxy-L-lyxo-4-hexulose. The sequence is that of dTDP-4-dehydrorhamnose 3,5-epimerase (rfbC) from Neisseria gonorrhoeae.